Here is a 197-residue protein sequence, read N- to C-terminus: Imidazoleglycerol-phosphate dehydratase (197 aa).

It belongs to the imidazoleglycerol-phosphate dehydratase family.

It is found in the cytoplasm. The enzyme catalyses D-erythro-1-(imidazol-4-yl)glycerol 3-phosphate = 3-(imidazol-4-yl)-2-oxopropyl phosphate + H2O. Its pathway is amino-acid biosynthesis; L-histidine biosynthesis; L-histidine from 5-phospho-alpha-D-ribose 1-diphosphate: step 6/9. The sequence is that of Imidazoleglycerol-phosphate dehydratase from Pseudomonas putida (strain W619).